Consider the following 836-residue polypeptide: Ethylene receptor 3 (836 aa).

The next 3 membrane-spanning stretches (helical) occupy residues 137-157 (LIAA…AGLR), 166-186 (LVQF…TAFT), and 204-224 (LTAL…PQLL). Residues Cys-176 and His-180 each coordinate Cu cation. A GAF domain is found at 269 to 413 (DRHTVLYTTL…VVAGQVAVAL (145 aa)). Residues 416 to 452 (ATLLEESRAMRDRLAEQNRELLQARRDALMANEARQA) adopt a coiled-coil conformation. Residues 457–691 (MSQGMRRPIH…LVLRFQLQSP (235 aa)) enclose the Histidine kinase domain. The Response regulatory domain occupies 718-834 (LLIDDDDDIN…LKDELARILQ (117 aa)).

The protein belongs to the ethylene receptor family. Cu cation serves as cofactor.

The protein resides in the endoplasmic reticulum membrane. It catalyses the reaction ATP + protein L-histidine = ADP + protein N-phospho-L-histidine.. Functionally, ethylene receptor related to bacterial two-component regulators. Acts as a negative regulator of ethylene signaling. May delay the transition from the vegetative stage to the floral stage by up-regulating GI (GIGANTEA) and RCN1 and cause starch accumulation in stems by down-regulating the alpha-amylase AMY3D. The polypeptide is Ethylene receptor 3 (ETR3) (Oryza sativa subsp. japonica (Rice)).